Consider the following 125-residue polypeptide: Phosphoribosyl-AMP cyclohydrolase (125 aa).

Residue Asp74 participates in Mg(2+) binding. Cys75 contributes to the Zn(2+) binding site. Residues Asp76 and Asp78 each contribute to the Mg(2+) site. The Zn(2+) site is built by Cys92 and Cys99.

It belongs to the PRA-CH family. As to quaternary structure, homodimer. Mg(2+) serves as cofactor. Zn(2+) is required as a cofactor.

Its subcellular location is the cytoplasm. It carries out the reaction 1-(5-phospho-beta-D-ribosyl)-5'-AMP + H2O = 1-(5-phospho-beta-D-ribosyl)-5-[(5-phospho-beta-D-ribosylamino)methylideneamino]imidazole-4-carboxamide. It functions in the pathway amino-acid biosynthesis; L-histidine biosynthesis; L-histidine from 5-phospho-alpha-D-ribose 1-diphosphate: step 3/9. Functionally, catalyzes the hydrolysis of the adenine ring of phosphoribosyl-AMP. The sequence is that of Phosphoribosyl-AMP cyclohydrolase from Pelobacter propionicus (strain DSM 2379 / NBRC 103807 / OttBd1).